A 542-amino-acid chain; its full sequence is Glutamyl-tRNA(Gln) amidotransferase subunit A, mitochondrial (542 aa).

Catalysis depends on charge relay system residues Lys-55 and Ser-143. The active-site Acyl-ester intermediate is Ser-167.

This sequence belongs to the amidase family. GatA subfamily. In terms of assembly, subunit of the heterotrimeric GatCAB amidotransferase (AdT) complex, composed of A, B and C subunits.

Its subcellular location is the mitochondrion. It carries out the reaction L-glutamyl-tRNA(Gln) + L-glutamine + ATP + H2O = L-glutaminyl-tRNA(Gln) + L-glutamate + ADP + phosphate + H(+). Allows the formation of correctly charged Gln-tRNA(Gln) through the transamidation of misacylated Glu-tRNA(Gln) in the mitochondria. The reaction takes place in the presence of glutamine and ATP through an activated gamma-phospho-Glu-tRNA(Gln). This Neurospora crassa (strain ATCC 24698 / 74-OR23-1A / CBS 708.71 / DSM 1257 / FGSC 987) protein is Glutamyl-tRNA(Gln) amidotransferase subunit A, mitochondrial.